Here is a 711-residue protein sequence, read N- to C-terminus: F-box only protein 34 (711 aa).

4 disordered regions span residues 1 to 36 (MHLK…VNDE), 249 to 271 (SESY…EVGE), 337 to 372 (DTQV…ASQD), and 494 to 529 (YSQL…GSAE). Positions 10 to 23 (QKKEHPPEVSRETQ) are enriched in basic and acidic residues. A compositionally biased stretch (basic and acidic residues) spans 354 to 364 (RADRCSPKEDQ). Residues 572 to 624 (QQYMAFLPHHIMVKIFRLLPTKSLVALKCTCCYFKFIIEYYNIRPADSRWVRD) form the F-box domain.

As to quaternary structure, directly interacts with SKP1 and CUL1.

In terms of biological role, substrate-recognition component of the SCF (SKP1-CUL1-F-box protein)-type E3 ubiquitin ligase complex. The polypeptide is F-box only protein 34 (FBXO34) (Homo sapiens (Human)).